Reading from the N-terminus, the 226-residue chain is Imidazoleglycerol-phosphate dehydratase (226 aa).

Residues Leu-23–Ala-55 form a disordered region.

This sequence belongs to the imidazoleglycerol-phosphate dehydratase family.

It catalyses the reaction D-erythro-1-(imidazol-4-yl)glycerol 3-phosphate = 3-(imidazol-4-yl)-2-oxopropyl phosphate + H2O. It functions in the pathway amino-acid biosynthesis; L-histidine biosynthesis; L-histidine from 5-phospho-alpha-D-ribose 1-diphosphate: step 6/9. The chain is Imidazoleglycerol-phosphate dehydratase (HIS3) from Maudiozyma humilis (Sour dough yeast).